Consider the following 653-residue polypeptide: Protein CBFA2T3 (653 aa).

Positions methionine 1–alanine 10 are enriched in basic and acidic residues. The disordered stretch occupies residues methionine 1 to threonine 109. Residues methionine 1–leucine 127 form a required for nucleolar targeting (in isoform 1) region. The tract at residues methionine 1–glutamate 430 is mediates interaction with PDE7A (in isoform 2). Residues methionine 1–alanine 435 are mediates localization to the nucleus. Over residues alanine 11–serine 23 the composition is skewed to low complexity. A compositionally biased stretch (pro residues) spans serine 75 to alanine 86. The tract at residues proline 145–leucine 242 is interaction with ZBTB33. One can recognise a TAFH domain in the interval alanine 171–glutamate 266. The tract at residues lysine 176 to leucine 268 is interaction with HIF1A. Residues leucine 284–tyrosine 342 are disordered. Basic and acidic residues predominate over residues glutamate 289 to serine 315. Over residues asparagine 331–histidine 341 the composition is skewed to pro residues. The interval glutamate 394–lysine 412 is nervy homology region 2 (NHR2); essential for down-regulation of PFKFB3, PFKFB4 and PDK1 expression. Over residues tryptophan 434–lysine 446 the composition is skewed to basic and acidic residues. The segment at tryptophan 434 to glutamate 472 is disordered. Over residues glycine 447–proline 462 the composition is skewed to low complexity. Phosphoserine is present on residues serine 457 and serine 459. Phosphothreonine is present on threonine 479. The interval aspartate 485 to glutamine 506 is mediates interaction with PRKAR2A. The nervy homology region 3 (NHR3); essential for down-regulation of PFKFB3, PFKFB4 and PDK1 expression stretch occupies residues aspartate 485–glutamate 533. Residues arginine 488–leucine 543 are a coiled coil. Residues cysteine 556, cysteine 559, cysteine 567, cysteine 570, cysteine 576, cysteine 580, histidine 588, and cysteine 592 each contribute to the Zn(2+) site. An MYND-type zinc finger spans residues cysteine 556 to cysteine 592. The disordered stretch occupies residues valine 603–arginine 653. A compositionally biased stretch (low complexity) spans proline 622–arginine 638. A phosphoserine mark is found at serine 637 and serine 641. Threonine 650 carries the post-translational modification Phosphothreonine.

Belongs to the CBFA2T family. In terms of assembly, homooligomer. Homotetramerization is mediated by nervy homology region 2 (NRH2). Can interact with RUNX1T1 and CBFA2T2; heterotetramerization between members of the CBFA2T family is proposed. Component of a TAL-1 complex composed at least of CBFA2T3, LDB1, TAL1 and TCF3. Interacts with ERBB4, HDAC1, HDAC2, HDAC3, HDAC6, HDAC8, NCOR1, NCOR2, and ZNF652. According to PubMed:12242670, may not interact with HDAC6. Interacts with PLXNA1, PLXNA3 and PRKAR1A. Isoform 2 interacts with PRKAR2A, PDE7A and probably PDE4A. Interacts with ZBTB4, ZBTB38 and ZBTB33. Interacts with HIF1A and EGLN1. Interacts with the AML1-MTG8/ETO fusion protein. In terms of tissue distribution, widely expressed with higher expression in heart, pancreas, skeletal muscle, spleen, thymus and peripheral blood leukocytes. Expressed in hematopoietic cells (at protein level).

The protein localises to the nucleus. It is found in the nucleolus. Its subcellular location is the nucleoplasm. The protein resides in the golgi apparatus membrane. In terms of biological role, transcriptional corepressor which facilitates transcriptional repression via its association with DNA-binding transcription factors and recruitment of other corepressors and histone-modifying enzymes. Can repress the expression of MMP7 in a ZBTB33-dependent manner. Reduces the protein levels and stability of the transcriptinal regulator HIF1A; interacts with EGLN1 and promotes the HIF1A prolyl hydroxylation-dependent ubiquitination and proteasomal degradation pathway. Contributes to inhibition of glycolysis and stimulation of mitochondrial respiration by down-regulating the expression of glycolytic genes including PFKFB3, PFKFB4, PDK1, PFKP, LDHA and HK1 which are direct targets of HIF1A. Regulates the proliferation and the differentiation of erythroid progenitors by repressing the expression of TAL1 target genes. Plays a role in granulocyte differentiation. Its function is as follows. Isoform 2 functions as an A-kinase-anchoring protein. The sequence is that of Protein CBFA2T3 (CBFA2T3) from Homo sapiens (Human).